The following is a 572-amino-acid chain: Dihydroxy-acid dehydratase (572 aa).

[2Fe-2S] cluster is bound at residue Cys57. Asp89 contacts Mg(2+). Cys130 serves as a coordination point for [2Fe-2S] cluster. Asp131 and Lys132 together coordinate Mg(2+). An N6-carboxylysine modification is found at Lys132. Cys202 serves as a coordination point for [2Fe-2S] cluster. Glu453 lines the Mg(2+) pocket. The Proton acceptor role is filled by Ser479.

Belongs to the IlvD/Edd family. Homodimer. [2Fe-2S] cluster is required as a cofactor. Requires Mg(2+) as cofactor.

The enzyme catalyses (2R)-2,3-dihydroxy-3-methylbutanoate = 3-methyl-2-oxobutanoate + H2O. The catalysed reaction is (2R,3R)-2,3-dihydroxy-3-methylpentanoate = (S)-3-methyl-2-oxopentanoate + H2O. It functions in the pathway amino-acid biosynthesis; L-isoleucine biosynthesis; L-isoleucine from 2-oxobutanoate: step 3/4. Its pathway is amino-acid biosynthesis; L-valine biosynthesis; L-valine from pyruvate: step 3/4. In terms of biological role, functions in the biosynthesis of branched-chain amino acids. Catalyzes the dehydration of (2R,3R)-2,3-dihydroxy-3-methylpentanoate (2,3-dihydroxy-3-methylvalerate) into 2-oxo-3-methylpentanoate (2-oxo-3-methylvalerate) and of (2R)-2,3-dihydroxy-3-methylbutanoate (2,3-dihydroxyisovalerate) into 2-oxo-3-methylbutanoate (2-oxoisovalerate), the penultimate precursor to L-isoleucine and L-valine, respectively. This chain is Dihydroxy-acid dehydratase, found in Streptococcus sanguinis (strain SK36).